Consider the following 285-residue polypeptide: Baculoviral IAP repeat-containing protein 7 (285 aa).

The tract at residues 18–47 (ESRARDSVRGPELSHREDGSGRTQEQDKPH) is disordered. Residues 19–47 (SRARDSVRGPELSHREDGSGRTQEQDKPH) are compositionally biased toward basic and acidic residues. Residues 96–161 (RLASFYDWPS…RWFPRCQFLL (66 aa)) form a BIR repeat. Zn(2+) is bound by residues Cys-130, Cys-133, His-150, and Cys-157. The segment at 184-225 (QREEPEDAVSATPSAPAHGSPELLRSRRETQPEDVSEPGAKD) is disordered. The RING-type zinc finger occupies 239-273 (CKVCLDRAVSIVFVPCGHFVCTECAPNLQLCPICR).

Belongs to the IAP family. In terms of assembly, binds to caspase-9. Interaction with DIABLO/SMAC via the BIR domain disrupts binding to caspase-9 and apoptotic suppressor activity. Interacts with TAB1. In vitro, interacts with caspase-3 and caspase-7 via its BIR domain. Autoubiquitinated and undergoes proteasome-mediated degradation. Post-translationally, the truncated protein (tLivin) not only loses its anti-apoptotic effect but also acquires a pro-apoptotic effect.

The protein localises to the nucleus. The protein resides in the cytoplasm. It is found in the golgi apparatus. The enzyme catalyses S-ubiquitinyl-[E2 ubiquitin-conjugating enzyme]-L-cysteine + [acceptor protein]-L-lysine = [E2 ubiquitin-conjugating enzyme]-L-cysteine + N(6)-ubiquitinyl-[acceptor protein]-L-lysine.. Apoptotic regulator capable of exerting proapoptotic and anti-apoptotic activities and plays crucial roles in apoptosis, cell proliferation, and cell cycle control. Its anti-apoptotic activity is mediated through the inhibition of CASP3, CASP7 and CASP9, as well as by its E3 ubiquitin-protein ligase activity. As it is a weak caspase inhibitor, its anti-apoptotic activity is thought to be due to its ability to ubiquitinate DIABLO/SMAC targeting it for degradation thereby promoting cell survival. May contribute to caspase inhibition, by blocking the ability of DIABLO/SMAC to disrupt XIAP/BIRC4-caspase interactions. Protects against apoptosis induced by TNF or by chemical agents such as adriamycin, etoposide or staurosporine. Suppression of apoptosis is mediated by activation of MAPK8/JNK1, and possibly also of MAPK9/JNK2. This activation depends on TAB1 and MAP3K7/TAK1. In vitro, inhibits CASP3 and proteolytic activation of pro-CASP9. This Mus musculus (Mouse) protein is Baculoviral IAP repeat-containing protein 7 (Birc7).